The chain runs to 145 residues: Large ribosomal subunit protein uL16 (145 aa).

Residues 1 to 17 show a composition bias toward basic residues; sequence MLMPKRVKHRKVQRGRM. The interval 1–20 is disordered; sequence MLMPKRVKHRKVQRGRMKGV.

Belongs to the universal ribosomal protein uL16 family. As to quaternary structure, part of the 50S ribosomal subunit.

Its function is as follows. Binds 23S rRNA and is also seen to make contacts with the A and possibly P site tRNAs. The sequence is that of Large ribosomal subunit protein uL16 from Acetivibrio thermocellus (strain ATCC 27405 / DSM 1237 / JCM 9322 / NBRC 103400 / NCIMB 10682 / NRRL B-4536 / VPI 7372) (Clostridium thermocellum).